Here is a 461-residue protein sequence, read N- to C-terminus: tRNA modification GTPase MnmE (461 aa).

(6S)-5-formyl-5,6,7,8-tetrahydrofolate is bound by residues K32, E89, and K128. The 164-residue stretch at G224–P387 folds into the TrmE-type G domain. Position 234 (N234) interacts with K(+). Residues N234–S239, S253–T259, and D278–G281 contribute to the GTP site. Position 238 (S238) interacts with Mg(2+). 3 residues coordinate K(+): S253, I255, and T258. Mg(2+) is bound at residue T259. K461 is a (6S)-5-formyl-5,6,7,8-tetrahydrofolate binding site.

It belongs to the TRAFAC class TrmE-Era-EngA-EngB-Septin-like GTPase superfamily. TrmE GTPase family. As to quaternary structure, homodimer. Heterotetramer of two MnmE and two MnmG subunits. Requires K(+) as cofactor.

Its subcellular location is the cytoplasm. In terms of biological role, exhibits a very high intrinsic GTPase hydrolysis rate. Involved in the addition of a carboxymethylaminomethyl (cmnm) group at the wobble position (U34) of certain tRNAs, forming tRNA-cmnm(5)s(2)U34. The protein is tRNA modification GTPase MnmE of Helicobacter pylori (strain ATCC 700392 / 26695) (Campylobacter pylori).